The primary structure comprises 201 residues: Ribonuclease HII (201 aa).

An RNase H type-2 domain is found at 10–200 (LIEAGCDEAG…LGTDPQLEIP (191 aa)). 3 residues coordinate a divalent metal cation: D16, E17, and D108.

The protein belongs to the RNase HII family. Requires Mn(2+) as cofactor. Mg(2+) is required as a cofactor.

It localises to the cytoplasm. The catalysed reaction is Endonucleolytic cleavage to 5'-phosphomonoester.. In terms of biological role, endonuclease that specifically degrades the RNA of RNA-DNA hybrids. This is Ribonuclease HII from Phocaeicola vulgatus (strain ATCC 8482 / DSM 1447 / JCM 5826 / CCUG 4940 / NBRC 14291 / NCTC 11154) (Bacteroides vulgatus).